The following is a 343-amino-acid chain: Cell division protein ZipA (343 aa).

At 1–4 the chain is on the periplasmic side; that stretch reads MDLN. A helical transmembrane segment spans residues 5–25; that stretch reads TILIILGILALIGLVAHGIWS. Residues 26–343 are Cytoplasmic-facing; that stretch reads NRREKSQYFD…MAEAAYLARV (318 aa). The interval 39–98 is disordered; sequence AFHRNPQSTGRPSAQASQPMTPNFAQPAKETEQIRQTYQEPQVRQMSSSPEQQTRPTAQA. 2 stretches are compositionally biased toward polar residues: residues 43 to 62 and 72 to 95; these read NPQSTGRPSAQASQPMTPNF and IRQTYQEPQVRQMSSSPEQQTRPT.

Belongs to the ZipA family. In terms of assembly, interacts with FtsZ via their C-terminal domains.

The protein resides in the cell inner membrane. In terms of biological role, essential cell division protein that stabilizes the FtsZ protofilaments by cross-linking them and that serves as a cytoplasmic membrane anchor for the Z ring. Also required for the recruitment to the septal ring of downstream cell division proteins. The sequence is that of Cell division protein ZipA from Actinobacillus succinogenes (strain ATCC 55618 / DSM 22257 / CCUG 43843 / 130Z).